A 344-amino-acid polypeptide reads, in one-letter code: Cinnamoyl-CoA reductase 1 (344 aa).

S7 carries the phosphoserine modification. NADP(+)-binding positions include 17–23 (GAGGYIA), R42, K48, 68–69 (DL), 88–90 (TAS), Y161, K165, 188–191 (PVLV), and S203. A disulfide bridge connects residues C154 and C162. K165 (proton donor) is an active-site residue. Positions 317–344 (QEKGHLAPPPPPPSASQESVENGIKIGS) are disordered.

It belongs to the NAD(P)-dependent epimerase/dehydratase family. Dihydroflavonol-4-reductase subfamily. Expressed in leaves, stems and flowers.

The enzyme catalyses (E)-cinnamaldehyde + NADP(+) + CoA = (E)-cinnamoyl-CoA + NADPH + H(+). It participates in aromatic compound metabolism; phenylpropanoid biosynthesis. Functionally, involved in the latter stages of lignin biosynthesis. Catalyzes one of the last steps of monolignol biosynthesis, the conversion of cinnamoyl-CoAs into their corresponding cinnamaldehydes. The polypeptide is Cinnamoyl-CoA reductase 1 (Arabidopsis thaliana (Mouse-ear cress)).